A 322-amino-acid chain; its full sequence is Large ribosomal subunit protein uL10 (322 aa).

The disordered stretch occupies residues 294 to 322 (APAAAAKAEKEEEPAEESDDEMGFGLFDE). The segment covering 304-322 (EEEPAEESDDEMGFGLFDE) has biased composition (acidic residues).

Belongs to the universal ribosomal protein uL10 family. In terms of assembly, P0 forms a pentameric complex by interaction with dimers of P1 and P2. Phosphorylated.

Functionally, ribosomal protein P0 is the functional equivalent of E.coli protein L10. The sequence is that of Large ribosomal subunit protein uL10 from Lupinus luteus (European yellow lupine).